A 391-amino-acid polypeptide reads, in one-letter code: GTPase Obg (391 aa).

The region spanning 1 to 159 (MKFVDEASIL…RDLLLELMLL (159 aa)) is the Obg domain. Residues 127–147 (NTRFKSSVNRTPRQKTNGTPG) form a disordered region. The segment covering 129–145 (RFKSSVNRTPRQKTNGT) has biased composition (polar residues). An OBG-type G domain is found at 160–333 (ADVGMLGMPN…LCWDVMTFII (174 aa)). GTP is bound by residues 166 to 173 (GMPNAGKS), 191 to 195 (FTTLV), 213 to 216 (DIPG), 283 to 286 (NKID), and 314 to 316 (SAA). Residues serine 173 and threonine 193 each contribute to the Mg(2+) site.

This sequence belongs to the TRAFAC class OBG-HflX-like GTPase superfamily. OBG GTPase family. Monomer. Mg(2+) is required as a cofactor.

The protein resides in the cytoplasm. Functionally, an essential GTPase which binds GTP, GDP and possibly (p)ppGpp with moderate affinity, with high nucleotide exchange rates and a fairly low GTP hydrolysis rate. Plays a role in control of the cell cycle, stress response, ribosome biogenesis and in those bacteria that undergo differentiation, in morphogenesis control. The chain is GTPase Obg from Salmonella arizonae (strain ATCC BAA-731 / CDC346-86 / RSK2980).